We begin with the raw amino-acid sequence, 181 residues long: Probable pyruvoyl-dependent arginine decarboxylase (181 aa).

A Pyruvic acid (Ser) modification is found at serine 43.

The protein belongs to the PdaD family. Pyruvate is required as a cofactor.

The enzyme catalyses L-arginine + H(+) = agmatine + CO2. The chain is Probable pyruvoyl-dependent arginine decarboxylase from Chlorobaculum parvum (strain DSM 263 / NCIMB 8327) (Chlorobium vibrioforme subsp. thiosulfatophilum).